We begin with the raw amino-acid sequence, 315 residues long: MSQLDALREMTVVVADTGDIEAIKQYQPQDATTNPSLILSASALPQYASLIDDAVAYAKARSDDKAQLLIDAEDKLAVNIGLEILKIVPGRISTEVDARLSYDTKATIEKARQIMKLYNDAGISNDRILIKIASTWQGIRAAEVLEKEGINCNLTLLFSQAQARACAKAGVYLISPFVGRILDWYKAAEKKEYAPAEDPGVISVTNIYNYYKQYGYQTVVMGASFRNVGEITEIAGCDRLTIAPPLLKELAESNAPLVRKLEYKGEVKTRPAPLTEAEFYWQHNQDPMAVEKLAEGIRKFAVDIEKLEAMLAAKL.

Lys-131 serves as the catalytic Schiff-base intermediate with substrate.

Belongs to the transaldolase family. Type 1 subfamily. As to quaternary structure, homodimer.

The protein resides in the cytoplasm. It carries out the reaction D-sedoheptulose 7-phosphate + D-glyceraldehyde 3-phosphate = D-erythrose 4-phosphate + beta-D-fructose 6-phosphate. The protein operates within carbohydrate degradation; pentose phosphate pathway; D-glyceraldehyde 3-phosphate and beta-D-fructose 6-phosphate from D-ribose 5-phosphate and D-xylulose 5-phosphate (non-oxidative stage): step 2/3. In terms of biological role, transaldolase is important for the balance of metabolites in the pentose-phosphate pathway. This chain is Transaldolase, found in Actinobacillus pleuropneumoniae serotype 5b (strain L20).